Here is a 138-residue protein sequence, read N- to C-terminus: ATP synthase epsilon chain (138 aa).

The protein belongs to the ATPase epsilon chain family. In terms of assembly, F-type ATPases have 2 components, CF(1) - the catalytic core - and CF(0) - the membrane proton channel. CF(1) has five subunits: alpha(3), beta(3), gamma(1), delta(1), epsilon(1). CF(0) has three main subunits: a, b and c.

The protein resides in the cell inner membrane. Functionally, produces ATP from ADP in the presence of a proton gradient across the membrane. The chain is ATP synthase epsilon chain from Idiomarina loihiensis (strain ATCC BAA-735 / DSM 15497 / L2-TR).